We begin with the raw amino-acid sequence, 65 residues long: Small ribosomal subunit protein bS21 (65 aa).

This sequence belongs to the bacterial ribosomal protein bS21 family.

This Trichlorobacter lovleyi (strain ATCC BAA-1151 / DSM 17278 / SZ) (Geobacter lovleyi) protein is Small ribosomal subunit protein bS21.